We begin with the raw amino-acid sequence, 129 residues long: Putative F-box protein At3g42722 (129 aa).

Residues 4–50 (MASIDCLPDELLVGILSFILTNEAASTSILSKRWRTLFAFSHNLDCN) form the F-box domain.

The sequence is that of Putative F-box protein At3g42722 from Arabidopsis thaliana (Mouse-ear cress).